A 293-amino-acid chain; its full sequence is Caspase-6 (293 aa).

Residues 1-20 (MSSEPPPRRARGPGEEQNMT) form a disordered region. A propeptide spanning residues 1 to 23 (MSSEPPPRRARGPGEEQNMTEID) is cleaved from the precursor. The tract at residues 42-44 (KRR) is tri-arginine exosite. Serine 79 is subject to Phosphoserine. The active site involves histidine 121. The interval 125-142 (NHIYAYDAKIEIQTLTGL) is 130's region. Cysteine 163 is an active-site residue. Positions 180 to 193 (HRTDTPDANLTQVD) are excised as a propeptide. Residue serine 257 is modified to Phosphoserine. Residues cysteine 264 and cysteine 277 are each lipidated (S-palmitoyl cysteine).

It belongs to the peptidase C14A family. Heterotetramer that consists of two anti-parallel arranged heterodimers, each one formed by a 18 kDa (p18) and a 11 kDa (p11) subunits. Interacts with BIRC6/bruce. Interacts with RIPK3. As to quaternary structure, heterotetramer that consists of two anti-parallel arranged heterodimers, each one formed by a 18 kDa (Caspase-6 subunit p18) and a 11 kDa (Caspase-6 subunit p11) subunit. Phosphorylated by NUAK1; phosphorylation inhibits self-activation. Phosphorylation at Ser-257 by AMP-activated protein kinase (PRKAA1 or PRKAA2) inhibits autocleavage, preventing caspase activation, thereby preventing hepatocyte apoptosis. In terms of processing, palmitoylation by ZDHHC17 blocks dimerization and subsequent activation, leading to inhibit the cysteine protease activity. Post-translationally, can be cleaved and activated by different caspases, depending on the context. Cleaved and activated by caspase-8 (CASP8) and subsequently by caspase-3 (CASP3). Can also undergo autoactivation by mediating autocleavage at Asp-179 and Asp-193, while it is not able to cleave its N-terminal disordered prodomain. Cleaved and activated by CASP1, possibly in the context of inflammation.

It is found in the cytoplasm. It localises to the nucleus. It catalyses the reaction Strict requirement for Asp at position P1 and has a preferred cleavage sequence of Val-Glu-His-Asp-|-.. Its activity is regulated as follows. During activation, the N-terminal disordered prodomain is removed by cleavage. Concomitantly, double cleavage gives rise to a large 18-kDa and a small 11-kDa subunit. The two large and two small subunits then assemble to form the active CASP6 complex. Can be cleaved and activated by different caspases, depending on the context. Cleaved and activated by caspase-8 (CASP8) and subsequently by caspase-3 (CASP3). Can also undergo autoactivation by mediating autocleavage at Asp-179 and Asp-193, while it is not able to cleave its N-terminal disordered prodomain. Intramolecular cleavage at Asp-193 is a prerequisite for CASP6 self-activation. Cleaved and activated by CASP1 in neurons, possibly in the context of inflammation. Phosphorylation at Ser-257 inhibits autocleavage, preventing caspase activation. In terms of biological role, cysteine protease that plays essential roles in programmed cell death, axonal degeneration, development and innate immunity. Acts as a non-canonical executioner caspase during apoptosis: localizes in the nucleus and cleaves the nuclear structural protein NUMA1 and lamin A/LMNA thereby inducing nuclear shrinkage and fragmentation. Lamin-A/LMNA cleavage is required for chromatin condensation and nuclear disassembly during apoptotic execution. Acts as a regulator of liver damage by promoting hepatocyte apoptosis: in absence of phosphorylation by AMP-activated protein kinase (AMPK), catalyzes cleavage of BID, leading to cytochrome c release, thereby participating in nonalcoholic steatohepatitis. Cleaves PARK7/DJ-1 in cells undergoing apoptosis. Involved in intrinsic apoptosis by mediating cleavage of RIPK1. Furthermore, cleaves many transcription factors such as NF-kappa-B and cAMP response element-binding protein/CREBBP. Cleaves phospholipid scramblase proteins XKR4 and XKR9. In addition to apoptosis, involved in different forms of programmed cell death. Plays an essential role in defense against viruses by acting as a central mediator of the ZBP1-mediated pyroptosis, apoptosis, and necroptosis (PANoptosis), independently of its cysteine protease activity. PANoptosis is a unique inflammatory programmed cell death, which provides a molecular scaffold that allows the interactions and activation of machinery required for inflammasome/pyroptosis, apoptosis and necroptosis. Mechanistically, interacts with RIPK3 and enhances the interaction between RIPK3 and ZBP1, leading to ZBP1-mediated inflammasome activation and cell death. Plays an essential role in axon degeneration during axon pruning which is the remodeling of axons during neurogenesis but not apoptosis. Regulates B-cell programs both during early development and after antigen stimulation. The chain is Caspase-6 from Bos taurus (Bovine).